The sequence spans 338 residues: Glyceraldehyde-3-phosphate dehydrogenase 2 (338 aa).

NAD(+)-binding positions include 12–13, aspartate 34, and arginine 79; that span reads RI. Residues 150 to 152, threonine 181, 210 to 211, and arginine 233 contribute to the D-glyceraldehyde 3-phosphate site; these read SCT and TG. Residue cysteine 151 is the Nucleophile of the active site. Residue asparagine 315 participates in NAD(+) binding.

The protein belongs to the glyceraldehyde-3-phosphate dehydrogenase family. In terms of assembly, homotetramer.

It is found in the cytoplasm. The enzyme catalyses D-glyceraldehyde 3-phosphate + phosphate + NAD(+) = (2R)-3-phospho-glyceroyl phosphate + NADH + H(+). It participates in carbohydrate degradation; glycolysis; pyruvate from D-glyceraldehyde 3-phosphate: step 1/5. This chain is Glyceraldehyde-3-phosphate dehydrogenase 2 (GPD2), found in Mucor circinelloides f. lusitanicus (Mucor racemosus var. lusitanicus).